Here is a 49-residue protein sequence, read N- to C-terminus: Large ribosomal subunit protein bL36 (49 aa).

Belongs to the bacterial ribosomal protein bL36 family.

This Pseudomonas fluorescens (strain ATCC BAA-477 / NRRL B-23932 / Pf-5) protein is Large ribosomal subunit protein bL36.